Reading from the N-terminus, the 423-residue chain is Glucose-1-phosphate adenylyltransferase (423 aa).

Residues Tyr98, Gly163, 178–179, and Ser189 contribute to the alpha-D-glucose 1-phosphate site; that span reads EK.

Belongs to the bacterial/plant glucose-1-phosphate adenylyltransferase family. As to quaternary structure, homotetramer.

The catalysed reaction is alpha-D-glucose 1-phosphate + ATP + H(+) = ADP-alpha-D-glucose + diphosphate. The protein operates within glycan biosynthesis; glycogen biosynthesis. Involved in the biosynthesis of ADP-glucose, a building block required for the elongation reactions to produce glycogen. Catalyzes the reaction between ATP and alpha-D-glucose 1-phosphate (G1P) to produce pyrophosphate and ADP-Glc. This chain is Glucose-1-phosphate adenylyltransferase, found in Thermotoga neapolitana (strain ATCC 49049 / DSM 4359 / NBRC 107923 / NS-E).